A 196-amino-acid chain; its full sequence is O-methyltransferase dpmpI (196 aa).

S-adenosyl-L-methionine contacts are provided by residues 127-128, D152, and 174-175; these read GG and SF. The interval 166–196 is disordered; sequence NGIEAVPHSFEDPQPIKSKSPRLDNLARERL. Positions 186-196 are enriched in basic and acidic residues; sequence PRLDNLARERL.

This sequence belongs to the class I-like SAM-binding methyltransferase superfamily. Cation-independent O-methyltransferase family.

It participates in secondary metabolite biosynthesis; terpenoid biosynthesis. Its function is as follows. O-methyltransferase; part of the gene cluster that mediates the biosynthesis of diterpenoid pyrones. The first step of the pathway is the synthesis of the alpha-pyrone moiety by the polyketide synthase dpmpA via condensation of one acetyl-CoA starter unit with 3 malonyl-CoA units and 2 methylations. The alpha-pyrone is then combined with geranylgeranyl pyrophosphate (GGPP) formed by the GGPP synthase dpmpD through the action of the prenyltransferase dpmpC to yield a linear alpha-pyrone diterpenoid. Subsequent steps in the diterpenoid pyrone biosynthetic pathway involve the decalin core formation, which is initiated by the epoxidation of the C10-C11 olefin by the FAD-dependent oxidoreductase dpmpE, and is followed by a cyclization cascade catalyzed by the terpene cyclase dpmpB. The short chain dehydrogenase/reductase dpmpG then oxidizes the 8S hydroxy group to a ketone and the short chain dehydrogenase/reductase dpmpH reduces the ketone to the 8R hydroxy group to yield higginsianin B. Higginsianin B is further methylated by the methyltransferase dpmpI to produce the intermediate named FDDP B. The cytochrome P450 monooxygenase dpmpJ then oxidizes the C-26 methyl to primary alcohol, producing the final diterpenoid pyrone with a C-26 primary alcohol on the gamma-pyrone moiety named FDDP C. The protein is O-methyltransferase dpmpI of Macrophomina phaseolina (strain MS6) (Charcoal rot fungus).